The primary structure comprises 179 residues: Large ribosomal subunit protein uL6 (179 aa).

This sequence belongs to the universal ribosomal protein uL6 family. As to quaternary structure, part of the 50S ribosomal subunit.

Functionally, this protein binds to the 23S rRNA, and is important in its secondary structure. It is located near the subunit interface in the base of the L7/L12 stalk, and near the tRNA binding site of the peptidyltransferase center. The chain is Large ribosomal subunit protein uL6 from Bifidobacterium adolescentis (strain ATCC 15703 / DSM 20083 / NCTC 11814 / E194a).